Reading from the N-terminus, the 284-residue chain is NAD kinase (284 aa).

The active-site Proton acceptor is the D61. Residues 61–62 (DG), R66, 136–137 (ND), R147, K164, D166, and L201 each bind NAD(+).

It belongs to the NAD kinase family. Requires a divalent metal cation as cofactor.

The protein resides in the cytoplasm. It carries out the reaction NAD(+) + ATP = ADP + NADP(+) + H(+). In terms of biological role, involved in the regulation of the intracellular balance of NAD and NADP, and is a key enzyme in the biosynthesis of NADP. Catalyzes specifically the phosphorylation on 2'-hydroxyl of the adenosine moiety of NAD to yield NADP. The protein is NAD kinase of Dehalococcoides mccartyi (strain CBDB1).